We begin with the raw amino-acid sequence, 78 residues long: Putative membrane protein insertion efficiency factor (78 aa).

This sequence belongs to the UPF0161 family.

The protein localises to the cell membrane. Its function is as follows. Could be involved in insertion of integral membrane proteins into the membrane. The chain is Putative membrane protein insertion efficiency factor from Bacillus mycoides (strain KBAB4) (Bacillus weihenstephanensis).